A 187-amino-acid polypeptide reads, in one-letter code: dTTP/UTP pyrophosphatase (187 aa).

Aspartate 65 functions as the Proton acceptor in the catalytic mechanism.

This sequence belongs to the Maf family. YhdE subfamily. Requires a divalent metal cation as cofactor.

It localises to the cytoplasm. It catalyses the reaction dTTP + H2O = dTMP + diphosphate + H(+). The enzyme catalyses UTP + H2O = UMP + diphosphate + H(+). Its function is as follows. Nucleoside triphosphate pyrophosphatase that hydrolyzes dTTP and UTP. May have a dual role in cell division arrest and in preventing the incorporation of modified nucleotides into cellular nucleic acids. This Deinococcus geothermalis (strain DSM 11300 / CIP 105573 / AG-3a) protein is dTTP/UTP pyrophosphatase.